Consider the following 549-residue polypeptide: Zinc finger protein 266 (549 aa).

The 42-residue stretch at 1-42 folds into the KRAB domain; the sequence is MLENYKNLATVGYQLFKPSLISWLEQEESRTVQRGDFQASEW. The segment at 156–178 adopts a C2H2-type 1; degenerate zinc-finger fold; sequence FDCSDSGKSFINHSHLQGHLRTH. The C2H2-type 2; degenerate zinc-finger motif lies at 184-206; it reads HEWKECGRGFIHSTDLAVRIQTH. 12 C2H2-type zinc fingers span residues 212–234, 240–262, 268–290, 296–318, 324–346, 352–374, 380–402, 408–430, 436–458, 464–486, 492–514, and 520–542; these read YKCK…MGTH, YECK…RKTH, YKCK…MKIH, YECK…LKTH, FECK…FRIH, YKCK…ARTH, YECK…TRTH, FECV…LRIH, FECL…MRTH, FTCM…MRIH, YKCK…ERTH, and YECK…ERRH. A disordered region spans residues 530-549; it reads SSSSSFRNHERRHADERLSA.

Belongs to the krueppel C2H2-type zinc-finger protein family.

Its subcellular location is the nucleus. Functionally, may be involved in transcriptional regulation. The chain is Zinc finger protein 266 (ZNF266) from Homo sapiens (Human).